Reading from the N-terminus, the 59-residue chain is Photosystem II reaction center protein K (59 aa).

Residues 1-22 (MLNIFSLIGLNSALYSSSCFFA) constitute a propeptide that is removed on maturation. Residues 30–50 (FLSPIVDFMPVIPLLFFLLAF) traverse the membrane as a helical segment.

The protein belongs to the PsbK family. In terms of assembly, PSII is composed of 1 copy each of membrane proteins PsbA, PsbB, PsbC, PsbD, PsbE, PsbF, PsbH, PsbI, PsbJ, PsbK, PsbL, PsbM, PsbT, PsbX, PsbY, PsbZ, Psb30/Ycf12, at least 3 peripheral proteins of the oxygen-evolving complex and a large number of cofactors. It forms dimeric complexes.

The protein resides in the plastid. It localises to the chloroplast thylakoid membrane. In terms of biological role, one of the components of the core complex of photosystem II (PSII). PSII is a light-driven water:plastoquinone oxidoreductase that uses light energy to abstract electrons from H(2)O, generating O(2) and a proton gradient subsequently used for ATP formation. It consists of a core antenna complex that captures photons, and an electron transfer chain that converts photonic excitation into a charge separation. This chain is Photosystem II reaction center protein K, found in Silene latifolia (White campion).